Consider the following 353-residue polypeptide: Phospho-N-acetylmuramoyl-pentapeptide-transferase (353 aa).

10 helical membrane passes run 24–44 (LGFFIAFFLTLFLMPKFILWA), 66–86 (TPTMGGIVFVFATIVASVLCA), 88–108 (LGNLYVLLGLIVLVGFSFVGF), 129–149 (FGMLFILSLIVSVLLSLKGLD), 160–180 (PLFEMPTMLAVGFWVLVFLST), 192–212 (GLASVPSIFTLLSLSIFVYVA), 229–249 (VGELFVVSLALVGSLFGFLWY), 256–276 (VFMGDSGSLALGGFIAYNAIV), 281–301 (ILLVLMGSIFVIETLSVILQV), and 330–350 (KVIVRFWIISMLSNLVALLSL).

This sequence belongs to the glycosyltransferase 4 family. MraY subfamily. Requires Mg(2+) as cofactor.

Its subcellular location is the cell inner membrane. The catalysed reaction is UDP-N-acetyl-alpha-D-muramoyl-L-alanyl-gamma-D-glutamyl-meso-2,6-diaminopimeloyl-D-alanyl-D-alanine + di-trans,octa-cis-undecaprenyl phosphate = di-trans,octa-cis-undecaprenyl diphospho-N-acetyl-alpha-D-muramoyl-L-alanyl-D-glutamyl-meso-2,6-diaminopimeloyl-D-alanyl-D-alanine + UMP. It functions in the pathway cell wall biogenesis; peptidoglycan biosynthesis. Catalyzes the initial step of the lipid cycle reactions in the biosynthesis of the cell wall peptidoglycan: transfers peptidoglycan precursor phospho-MurNAc-pentapeptide from UDP-MurNAc-pentapeptide onto the lipid carrier undecaprenyl phosphate, yielding undecaprenyl-pyrophosphoryl-MurNAc-pentapeptide, known as lipid I. This chain is Phospho-N-acetylmuramoyl-pentapeptide-transferase, found in Helicobacter pylori (strain ATCC 700392 / 26695) (Campylobacter pylori).